The chain runs to 419 residues: Inward rectifier potassium channel 16 (419 aa).

Over 1–67 (MSYYGSSYRI…MVDIFTTLVD (67 aa)) the chain is Cytoplasmic. A helical membrane pass occupies residues 68–94 (TKWRHMFVVFSLSYILSWLIFGSIFWL). Topologically, residues 95 to 117 (IALHHGDLLSDPDITPCVDNVHS) are extracellular. An intramembrane region (helical; Pore-forming) is located at residues 118-134 (FTAAFLFSLETQTTIGY). The short motif at 131-136 (TIGYGY) is the Selectivity filter element. Topologically, residues 135 to 143 (GYRCVTEEC) are extracellular. The helical transmembrane segment at 144–171 (SVAVLTVILQSILSCIINTFIIGAALAK) threads the bilayer. Residues 172-419 (MATARKRAQT…LNRISMESQM (248 aa)) are Cytoplasmic-facing. Residues Ser-358, Ser-374, and Ser-376 each carry the phosphoserine modification.

Belongs to the inward rectifier-type potassium channel (TC 1.A.2.1) family. KCNJ16 subfamily. In terms of assembly, it forms heteromeric channels with Kir4.1/KCNJ10; this interaction is required for KCNJ16 localization to the basolateral membrane in kidney cells. As a heteromer with KCNJ10, may interact with MAGI1; this interaction may facilitate KCNJ10/KCNJ16 potassium channel expression at the basolateral membrane in kidney cells. May form heteromers with Kir2.1/KCNJ2. Can form heteromeric channels with Kir4.2/KCNJ15. As to expression, expressed in the brain, testis, liver, spleen, kidney, submaxillary gland and adrenals. In the kidney, expressed in the epithelial cells of both proximal and distal convoluted tubules, in the endothelial cells surrounding glomerular capillaries and in the flattened parietal layer of Bowman's capsule.

Its subcellular location is the membrane. It is found in the basolateral cell membrane. The catalysed reaction is K(+)(in) = K(+)(out). With respect to regulation, channel activity is strongly regulated by variations of cytosolic pH; channels are activated by alkaline and inhibited by acidic pH values. Activated by phosphatidylinositol 4,5 biphosphate (PtdIns(4,5)P2). Inward rectifier potassium channels are characterized by a greater tendency to allow potassium to flow into the cell rather than out of it. Their voltage dependence is regulated by the concentration of extracellular potassium; as external potassium is raised, the voltage range of the channel opening shifts to more positive voltages. The inward rectification is mainly due to the blockage of outward current by internal magnesium. KCNJ16 may be involved in the regulation of fluid and pH balance. In the kidney, together with KCNJ10, mediates basolateral K(+) recycling in distal tubules; this process is critical for Na(+) reabsorption at the tubules. The protein is Inward rectifier potassium channel 16 (Kcnj16) of Rattus norvegicus (Rat).